Reading from the N-terminus, the 2225-residue chain is Multifunctional protein pyr1-3 (2225 aa).

At methionine 1 the chain carries N-acetylmethionine. Positions 40 to 390 (MVGYNESISD…NVCGEQQHKS (351 aa)) are GATase (Glutamine amidotransferase). Residues serine 51, glycine 245, and glycine 247 each contribute to the L-glutamine site. One can recognise a Glutamine amidotransferase type-1 domain in the interval 196 to 388 (KVIVLDCGIK…VDNVCGEQQH (193 aa)). The active-site Nucleophile; for GATase activity is cysteine 275. Positions 279, 317, 319, and 320 each coordinate L-glutamine. Residues histidine 361 and glutamate 363 each act as for GATase activity in the active site. The interval 391–405 (PMNKSKIIDCPKGIN) is linker. The interval 406–948 (KVLILGSGGL…TNDVNINEKS (543 aa)) is CPSase A. Positions 406–1461 (KVLILGSGGL…MKGPMPIENV (1056 aa)) are CPSase (Carbamoyl-phosphate synthase). ATP contacts are provided by arginine 526, arginine 566, glycine 572, glycine 573, lysine 603, glutamate 610, glycine 636, isoleucine 637, histidine 638, glutamine 679, and glutamate 693. ATP-grasp domains are found at residues 530–722 (AEKL…KVAL) and 1069–1260 (SRLL…KIII). Mg(2+) contacts are provided by glutamine 679, glutamate 693, and asparagine 695. Residues glutamine 679, glutamate 693, and asparagine 695 each coordinate Mn(2+). Positions 949 to 1461 (YITLGSGSYR…MKGPMPIENV (513 aa)) are CPSase B. The ATP site is built by arginine 1105, lysine 1144, isoleucine 1146, glutamate 1151, glycine 1176, valine 1177, histidine 1178, serine 1179, glutamine 1219, and glutamate 1231. Positions 1219, 1231, and 1233 each coordinate Mg(2+). The Mn(2+) site is built by glutamine 1219, glutamate 1231, and asparagine 1233. The region spanning 1324 to 1470 (FKAPEKNVLL…VDWRTSNKII (147 aa)) is the MGS-like domain. The tract at residues 1463–1797 (WRTSNKIIRL…VRGKVVKVVL (335 aa)) is DHOase (dihydroorotase). 2 residues coordinate Zn(2+): histidine 1479 and histidine 1481. Arginine 1483 and asparagine 1513 together coordinate (S)-dihydroorotate. Residues lysine 1564, histidine 1599, cysteine 1622, histidine 1623, and glutamate 1646 each contribute to the Zn(2+) site. Lysine 1564 is subject to N6-carboxylysine. Arginine 1670 is a binding site for (S)-dihydroorotate. Aspartate 1695 is a binding site for Zn(2+). Residue aspartate 1695 is the For DHOase activity of the active site. The (S)-dihydroorotate site is built by histidine 1699 and proline 1711. Residues 1798–1916 (RGQIAFIDGK…DTLQTAFNIS (119 aa)) are linker. The interval 1917–2225 (DNSLAGKHIF…LLALVFGAGV (309 aa)) is ATCase (Aspartate transcarbamylase). Positions 1974 and 1975 each coordinate carbamoyl phosphate. Lysine 2002 is a binding site for L-aspartate. Carbamoyl phosphate is bound by residues arginine 2023, histidine 2051, and glutamine 2054. Positions 2084 and 2145 each coordinate L-aspartate. Carbamoyl phosphate-binding residues include leucine 2184 and proline 2185.

It in the N-terminal section; belongs to the CarA family. This sequence in the 2nd section; belongs to the CarB family. The protein in the 3rd section; belongs to the metallo-dependent hydrolases superfamily. DHOase family. CAD subfamily. In the C-terminal section; belongs to the aspartate/ornithine carbamoyltransferase superfamily. ATCase family. As to quaternary structure, homohexamer. Requires Mg(2+) as cofactor. Mn(2+) serves as cofactor. Zn(2+) is required as a cofactor.

It localises to the cytoplasm. The enzyme catalyses hydrogencarbonate + L-glutamine + 2 ATP + H2O = carbamoyl phosphate + L-glutamate + 2 ADP + phosphate + 2 H(+). The catalysed reaction is L-glutamine + H2O = L-glutamate + NH4(+). It catalyses the reaction hydrogencarbonate + NH4(+) + 2 ATP = carbamoyl phosphate + 2 ADP + phosphate + 2 H(+). It carries out the reaction carbamoyl phosphate + L-aspartate = N-carbamoyl-L-aspartate + phosphate + H(+). The enzyme catalyses (S)-dihydroorotate + H2O = N-carbamoyl-L-aspartate + H(+). It participates in pyrimidine metabolism; UMP biosynthesis via de novo pathway; (S)-dihydroorotate from bicarbonate: step 1/3. The protein operates within pyrimidine metabolism; UMP biosynthesis via de novo pathway; (S)-dihydroorotate from bicarbonate: step 2/3. It functions in the pathway pyrimidine metabolism; UMP biosynthesis via de novo pathway; (S)-dihydroorotate from bicarbonate: step 3/3. Allosterically regulated and controlled by phosphorylation. 5-phosphoribose 1-diphosphate is an activator while UMP is an inhibitor of the CPSase reaction. Multifunctional protein that encodes the first 3 enzymatic activities of the de novo pyrimidine pathway: carbamoylphosphate synthetase (CPSase; EC 6.3.5.5), aspartate transcarbamylase (ATCase; EC 2.1.3.2) and dihydroorotase (DHOase; EC 3.5.2.3). The CPSase-function is accomplished in 2 steps, by a glutamine-dependent amidotransferase activity (GATase) that binds and cleaves glutamine to produce ammonia, followed by an ammonium-dependent carbamoyl phosphate synthetase, which reacts with the ammonia, hydrogencarbonate and ATP to form carbamoyl phosphate. The endogenously produced carbamoyl phosphate is sequestered and channeled to the ATCase active site. ATCase then catalyzes the formation of carbamoyl-L-aspartate from L-aspartate and carbamoyl phosphate. In the last step, DHOase catalyzes the cyclization of carbamoyl aspartate to dihydroorotate. In Dictyostelium discoideum (Social amoeba), this protein is Multifunctional protein pyr1-3 (pyr1-3).